Reading from the N-terminus, the 364-residue chain is Fructose-1,6-bisphosphatase class 1 3 (364 aa).

Residues E101, D123, L125, and D126 each contribute to the Mg(2+) site. Substrate contacts are provided by residues 126–129 (DGSS) and N218. E290 lines the Mg(2+) pocket.

This sequence belongs to the FBPase class 1 family. Homotetramer. Mg(2+) serves as cofactor.

The protein resides in the cytoplasm. It carries out the reaction beta-D-fructose 1,6-bisphosphate + H2O = beta-D-fructose 6-phosphate + phosphate. It functions in the pathway carbohydrate biosynthesis; gluconeogenesis. The protein is Fructose-1,6-bisphosphatase class 1 3 of Cupriavidus necator (strain ATCC 17699 / DSM 428 / KCTC 22496 / NCIMB 10442 / H16 / Stanier 337) (Ralstonia eutropha).